Consider the following 534-residue polypeptide: Probable alkaline/neutral invertase D (534 aa).

2 positions are modified to phosphoserine: Ser-7 and Ser-37. Thr-55 carries the phosphothreonine modification. Ser-532 is modified (phosphoserine).

Belongs to the glycosyl hydrolase 100 family.

The catalysed reaction is Hydrolysis of terminal non-reducing beta-D-fructofuranoside residues in beta-D-fructofuranosides.. Its function is as follows. Invertase that cleaves sucrose into glucose and fructose. The protein is Probable alkaline/neutral invertase D of Arabidopsis thaliana (Mouse-ear cress).